We begin with the raw amino-acid sequence, 697 residues long: Probable glutamine--tRNA ligase (697 aa).

The 'HIGH' region signature appears at 204-214 (PEPNGILHIGH). Residues 205–207 (EPN) and 211–217 (HIGHAKA) each bind ATP. L-glutamine-binding residues include Asp-237 and Tyr-386. Residues Thr-405, 434-435 (RL), and 442-444 (LSK) contribute to the ATP site. Residues 441 to 445 (VLSKR) carry the 'KMSKS' region motif.

This sequence belongs to the class-I aminoacyl-tRNA synthetase family.

The enzyme catalyses tRNA(Gln) + L-glutamine + ATP = L-glutaminyl-tRNA(Gln) + AMP + diphosphate. This is Probable glutamine--tRNA ligase from Encephalitozoon cuniculi (strain GB-M1) (Microsporidian parasite).